Reading from the N-terminus, the 364-residue chain is Serine/threonine-protein kinase ENV7 (364 aa).

3 S-palmitoyl cysteine lipidation sites follow: Cys-13, Cys-14, and Cys-15. Residues Tyr-30–Thr-364 form the Protein kinase domain. ATP-binding positions include Leu-36–Val-44 and Lys-69. Asp-215 (proton acceptor) is an active-site residue.

It belongs to the protein kinase superfamily. Ser/Thr protein kinase family.

Its subcellular location is the vacuole membrane. It carries out the reaction L-seryl-[protein] + ATP = O-phospho-L-seryl-[protein] + ADP + H(+). The enzyme catalyses L-threonyl-[protein] + ATP = O-phospho-L-threonyl-[protein] + ADP + H(+). Serine/threonine-protein kinase involved in vacuolar processing and morphology. This is Serine/threonine-protein kinase ENV7 (ENV7) from Saccharomyces cerevisiae (strain ATCC 204508 / S288c) (Baker's yeast).